The sequence spans 782 residues: Vacuolar import and degradation protein 27 (782 aa).

Residues Ser-170, Ser-195, and Ser-196 each carry the phosphoserine modification. Positions Asp-188–Phe-200 are enriched in acidic residues. The segment at Asp-188–Glu-215 is disordered. Residues Gln-201–Glu-215 are compositionally biased toward basic and acidic residues. Phosphoserine is present on Ser-222. The span at Asp-372–Ser-384 shows a compositional bias: basic and acidic residues. Residues Asp-372 to Ser-422 are disordered. A compositionally biased stretch (acidic residues) spans Glu-385–Asn-397. At Thr-486 the chain carries Phosphothreonine.

The protein belongs to the VID27 family.

It is found in the cytoplasm. Its function is as follows. Has a role in the negative regulation of gluconeogenesis. Required for vacuolar catabolite degradation of fructose-1,6-bisphosphatase (FBPase). This is Vacuolar import and degradation protein 27 (VID27) from Saccharomyces cerevisiae (strain ATCC 204508 / S288c) (Baker's yeast).